The sequence spans 297 residues: 4-diphosphocytidyl-2-C-methyl-D-erythritol kinase (297 aa).

Lys-14 is an active-site residue. Residue 99-109 (PVAAGIGGGSA) participates in ATP binding. The active site involves Asp-141.

It belongs to the GHMP kinase family. IspE subfamily.

The enzyme catalyses 4-CDP-2-C-methyl-D-erythritol + ATP = 4-CDP-2-C-methyl-D-erythritol 2-phosphate + ADP + H(+). The protein operates within isoprenoid biosynthesis; isopentenyl diphosphate biosynthesis via DXP pathway; isopentenyl diphosphate from 1-deoxy-D-xylulose 5-phosphate: step 3/6. Catalyzes the phosphorylation of the position 2 hydroxy group of 4-diphosphocytidyl-2C-methyl-D-erythritol. The polypeptide is 4-diphosphocytidyl-2-C-methyl-D-erythritol kinase (Bradyrhizobium diazoefficiens (strain JCM 10833 / BCRC 13528 / IAM 13628 / NBRC 14792 / USDA 110)).